We begin with the raw amino-acid sequence, 182 residues long: UPF0301 protein NMC1274 (182 aa).

It belongs to the UPF0301 (AlgH) family.

In Neisseria meningitidis serogroup C / serotype 2a (strain ATCC 700532 / DSM 15464 / FAM18), this protein is UPF0301 protein NMC1274.